Reading from the N-terminus, the 211-residue chain is Phosphoserine phosphatase 1 (211 aa).

H9 functions as the Tele-phosphohistidine intermediate in the catalytic mechanism. Residue H150 is part of the active site.

It belongs to the histidine phosphatase superfamily. Metal-independent phosphoserine phosphatase family. Homodimer. Can also form a heterodimer with PspB.

It carries out the reaction O-phospho-L-serine + H2O = L-serine + phosphate. The catalysed reaction is O-phospho-D-serine + H2O = D-serine + phosphate. It functions in the pathway amino-acid biosynthesis; L-serine biosynthesis; L-serine from 3-phospho-D-glycerate: step 3/3. Its activity is regulated as follows. Activity is not inhibited by EDTA in vitro, nor enhanced by the addition of Mg(2+). Catalyzes the dephosphorylation of L-phosphoserine to serine and inorganic phosphate. Is poorly or not active toward D-phosphoserine, DL-phosphothreonine, 3-phosphoglycerate, para-nitrophenylphosphate, and fructose-6-phosphate. Does not display phosphoglycerate mutase activity. This Hydrogenobacter thermophilus (strain DSM 6534 / IAM 12695 / TK-6) protein is Phosphoserine phosphatase 1 (pspA).